Here is a 307-residue protein sequence, read N- to C-terminus: tRNA dimethylallyltransferase (307 aa).

10 to 17 provides a ligand contact to ATP; the sequence is GPTASGKS. A substrate-binding site is contributed by 12–17; the sequence is TASGKS. Interaction with substrate tRNA regions lie at residues 35–38 and 159–163; these read DSMQ and QRLCR.

The protein belongs to the IPP transferase family. As to quaternary structure, monomer. Mg(2+) serves as cofactor.

It catalyses the reaction adenosine(37) in tRNA + dimethylallyl diphosphate = N(6)-dimethylallyladenosine(37) in tRNA + diphosphate. Catalyzes the transfer of a dimethylallyl group onto the adenine at position 37 in tRNAs that read codons beginning with uridine, leading to the formation of N6-(dimethylallyl)adenosine (i(6)A). The sequence is that of tRNA dimethylallyltransferase from Phenylobacterium zucineum (strain HLK1).